Reading from the N-terminus, the 278-residue chain is Indole-3-glycerol phosphate synthase (278 aa).

This sequence belongs to the TrpC family.

It catalyses the reaction 1-(2-carboxyphenylamino)-1-deoxy-D-ribulose 5-phosphate + H(+) = (1S,2R)-1-C-(indol-3-yl)glycerol 3-phosphate + CO2 + H2O. The protein operates within amino-acid biosynthesis; L-tryptophan biosynthesis; L-tryptophan from chorismate: step 4/5. This chain is Indole-3-glycerol phosphate synthase, found in Pseudomonas fluorescens (strain Pf0-1).